The sequence spans 825 residues: Zinc finger protein 229 (825 aa).

Residues 1–26 are disordered; it reads METLTSRHEKRALHSQASAISQDREE. Residues 34-108 enclose the KRAB domain; sequence LSFKDVAVVF…SHKELSSCKI (75 aa). The segment at 291 to 315 adopts a C2H2-type 1; degenerate zinc-finger fold; sequence KLCQYDEFSEGLRHSAHLNRHQRVP. C2H2-type zinc fingers lie at residues 349-371, 377-399, 405-427, 433-455, 461-483, 489-511, and 517-539; these read YRCDVCGKGFRYKSVLLIHQGVH, YKCEECGKAFGRSSNLLVHQRVH, YKCSECGKGFSYSSVLQVHQRLH, YTCSECGKGFCAKSALHKHQHIH, YSCGECGKGFSCSSHLSSHQKTH, YQCDKCGKGFSHNSYLQAHQRVH, and YKCNVCGKSFSYSSGLLMHQRLH. Lys543 is covalently cross-linked (Glycyl lysine isopeptide (Lys-Gly) (interchain with G-Cter in SUMO2)). C2H2-type zinc fingers lie at residues 545-566, 572-594, 600-622, 628-650, 656-678, 684-706, 712-734, 740-762, 768-790, and 796-818; these read YKCECGKSFGRSSDLHIHQRVH, YKCSECGKGFRRNSDLHSHQRVH, YVCDVCGKGFIYSSDLLIHQRVH, YKCAECGKGFSYSSGLLIHQRVH, YRCQECGKGFRCTSSLHKHQRVH, YTCDQCGKGFSYGSNLRTHQRLH, YTCCECGKGFRYGSGLLSHKRVH, YRCHVCGKGYSQSSHLQGHQRVH, YKCEECGKGFGRNSCLHVHQRVH, and YTCGVCGKGFSYTSGLRNHQRVH.

Belongs to the krueppel C2H2-type zinc-finger protein family.

Its subcellular location is the nucleus. Its function is as follows. May be involved in transcriptional regulation. This chain is Zinc finger protein 229, found in Homo sapiens (Human).